The following is a 161-amino-acid chain: MRKKALIFTVIFGIIFLAVLLVSASIYKSAMAQKEEGHEAAAAEAKKETDLAHVDQVETFVGKEKYYVVKGTDKKGTALYVWVPADKKAKILSKEAKEGISEDKAAKIIKDEGLVSKQKEVHLAREGNVLLWEVTYLDKEGQYSLSYVDFTTGKILKNITP.

The Cytoplasmic segment spans residues 1–5 (MRKKA). Residues 6–26 (LIFTVIFGIIFLAVLLVSASI) traverse the membrane as a helical segment. At 27–161 (YKSAMAQKEE…TGKILKNITP (135 aa)) the chain is on the extracellular side.

Interacts with the penicillin-binding protein PBP2A, a monofunctional transpeptidase.

The protein localises to the cell membrane. Functionally, required for normal cell shape. Plays an important role in cell wall elongation during exponential phase and spore outgrowth. Probably regulates the activity of the penicillin-binding protein PBP2A through a direct interaction. Not required for PBP2A activity, stability and localization. The polypeptide is Probable cell wall elongation regulator TseB (Bacillus subtilis (strain 168)).